Consider the following 178-residue polypeptide: Large ribosomal subunit protein uL6 (178 aa).

The protein belongs to the universal ribosomal protein uL6 family. In terms of assembly, part of the 50S ribosomal subunit.

Its function is as follows. This protein binds to the 23S rRNA, and is important in its secondary structure. It is located near the subunit interface in the base of the L7/L12 stalk, and near the tRNA binding site of the peptidyltransferase center. The protein is Large ribosomal subunit protein uL6 of Francisella tularensis subsp. holarctica (strain FTNF002-00 / FTA).